A 712-amino-acid chain; its full sequence is Matrix metalloproteinase-9 (712 aa).

The N-terminal stretch at 1-19 is a signal peptide; sequence MSPLQPLVLALLVLACCSA. The propeptide at 20 to 106 is activation peptide; the sequence is VPRRRQPTVV…PRCGVPDVGR (87 aa). N38 is a glycosylation site (N-linked (GlcNAc...) asparagine). The Cysteine switch motif lies at 97-104; that stretch reads PRCGVPDV. Residue C99 coordinates Zn(2+). Residues N120 and N127 are each glycosylated (N-linked (GlcNAc...) asparagine). Positions 131 and 165 each coordinate Ca(2+). Residues H175 and D177 each contribute to the Zn(2+) site. Residues D182, G183, N185, and L187 each coordinate Ca(2+). A Zn(2+)-binding site is contributed by H190. Positions 197, 199, and 201 each coordinate Ca(2+). A Zn(2+)-binding site is contributed by H203. D205, D206, and E208 together coordinate Ca(2+). 3 consecutive Fibronectin type-II domains span residues 225-273, 283-331, and 342-390; these read AKGA…FCPS, ADGK…FCPT, and AAGE…FCPD. 6 disulfides stabilise this stretch: C230/C256, C244/C271, C288/C314, C302/C329, C347/C373, and C361/C388. H401 provides a ligand contact to Zn(2+). E402 is a catalytic residue. Zn(2+) contacts are provided by H405 and H411. The interval 440-519 is disordered; sequence QHLYGPRPEP…PTESPDPAED (80 aa). The span at 455 to 465 shows a compositional bias: low complexity; that stretch reads TTTTTTTTEPQ. The span at 491 to 504 shows a compositional bias: pro residues; sequence TGPPAAGPTGPPTA. Residues 505–514 are compositionally biased toward low complexity; sequence GPSAAPTESP. C521 and C709 form a disulfide bridge. 4 Hemopexin repeats span residues 523-568, 569-613, 615-662, and 663-709; these read VDIF…WPAL, PRKL…GLGP, VAQV…FPGV, and PIST…LLKC.

Belongs to the peptidase M10A family. In terms of assembly, exists as monomer or homodimer; disulfide-linked. Also exists as heterodimer with LCN2. Macrophages and transformed cell lines produce only the monomeric form. Interacts with ECM1. It depends on Zn(2+) as a cofactor. The cofactor is Ca(2+). In terms of processing, N- and O-glycosylated.

It localises to the secreted. The protein resides in the extracellular space. It is found in the extracellular matrix. The catalysed reaction is Cleavage of gelatin types I and V and collagen types IV and V.. Matrix metalloproteinase that plays an essential role in local proteolysis of the extracellular matrix and in leukocyte migration. Could play a role in bone osteoclastic resorption. Cleaves KiSS1 at a Gly-|-Leu bond. Cleaves NINJ1 to generate the Secreted ninjurin-1 form. Cleaves type IV and type V collagen into large C-terminal three quarter fragments and shorter N-terminal one quarter fragments. Degrades fibronectin but not laminin or Pz-peptide. The sequence is that of Matrix metalloproteinase-9 from Bos taurus (Bovine).